We begin with the raw amino-acid sequence, 387 residues long: Lipid-A-disaccharide synthase (387 aa).

It belongs to the LpxB family.

It catalyses the reaction a lipid X + a UDP-2-N,3-O-bis[(3R)-3-hydroxyacyl]-alpha-D-glucosamine = a lipid A disaccharide + UDP + H(+). The protein operates within bacterial outer membrane biogenesis; LPS lipid A biosynthesis. In terms of biological role, condensation of UDP-2,3-diacylglucosamine and 2,3-diacylglucosamine-1-phosphate to form lipid A disaccharide, a precursor of lipid A, a phosphorylated glycolipid that anchors the lipopolysaccharide to the outer membrane of the cell. The protein is Lipid-A-disaccharide synthase of Glaesserella parasuis serovar 5 (strain SH0165) (Haemophilus parasuis).